Consider the following 95-residue polypeptide: Integration host factor subunit alpha (95 aa).

A disordered region spans residues 51-71; that stretch reads NFDLRDKNERPGRNPKTGEDI. Positions 53–69 are enriched in basic and acidic residues; it reads DLRDKNERPGRNPKTGE.

This sequence belongs to the bacterial histone-like protein family. In terms of assembly, heterodimer of an alpha and a beta chain.

Functionally, this protein is one of the two subunits of integration host factor, a specific DNA-binding protein that functions in genetic recombination as well as in transcriptional and translational control. This chain is Integration host factor subunit alpha, found in Vibrio vulnificus (strain CMCP6).